Here is a 447-residue protein sequence, read N- to C-terminus: Dihydroorotase (447 aa).

Positions 81 and 83 each coordinate Zn(2+). Substrate is bound by residues 83–85 and asparagine 115; that span reads HFR. Residues aspartate 171, histidine 198, and histidine 252 each coordinate Zn(2+). Asparagine 298 is a binding site for substrate. Aspartate 325 serves as a coordination point for Zn(2+). Aspartate 325 is a catalytic residue. Residues histidine 329 and 343-344 each bind substrate; that span reads FG.

It belongs to the metallo-dependent hydrolases superfamily. DHOase family. Class I DHOase subfamily. Zn(2+) serves as cofactor.

It carries out the reaction (S)-dihydroorotate + H2O = N-carbamoyl-L-aspartate + H(+). It functions in the pathway pyrimidine metabolism; UMP biosynthesis via de novo pathway; (S)-dihydroorotate from bicarbonate: step 3/3. In terms of biological role, catalyzes the reversible cyclization of carbamoyl aspartate to dihydroorotate. The protein is Dihydroorotase of Ehrlichia chaffeensis (strain ATCC CRL-10679 / Arkansas).